The following is a 736-amino-acid chain: Transcription regulator protein BACH1 (736 aa).

One can recognise a BTB domain in the interval 34-100; sequence CDVTIFVEGQ…AYTAKLILSK (67 aa). At serine 196 the chain carries Phosphoserine. The span at 286–295 shows a compositional bias: basic and acidic residues; that stretch reads MEPEETKKDP. Disordered regions lie at residues 286 to 312 and 349 to 389; these read MEPE…FPHN and KPLS…RSSV. Phosphoserine occurs at positions 364 and 445. Residues 557-620 form the bZIP domain; the sequence is CIHDIRRRSK…GETKQNLTGL (64 aa). Residues 562 to 578 are basic motif; that stretch reads RRRSKNRIAAQRCRKRK. The leucine-zipper stretch occupies residues 582 to 589; it reads IQNLESEI. A disordered region spans residues 680-719; it reads LPPCARGNSEPGYARGQESQQMSTATSEQAGPAEQCRQSG. Positions 696 to 708 are enriched in polar residues; the sequence is QESQQMSTATSEQ.

Belongs to the bZIP family. CNC subfamily. Heterodimer of BACH1 and MAFK. In terms of processing, ubiquitinated by the SCF(FBXL17) complex or by the by the SCF(FBXO22) complex, leading to its degradation by the proteasome. Under oxidative stress, reactive oxygen species covalently modify cysteine residues on the bZIP domain of BACH1 and release it from chromatin. If the BTB domain of BACH1 remains intact, its beta1-alpha6 degron is recognized by FBXO22, promoting its ubiquitination and degradation. If the structural integrity of the beta1-alpha6 degron is compromised, FBXL17 will transiently associate with the BACH1 BTB dimer and remodel it into stably bound monomer for ubiquitination and degradation.

Its subcellular location is the nucleus. Functionally, transcriptional regulator that acts as a repressor or activator, depending on the context. Binds to NF-E2 DNA binding sites. Plays important roles in coordinating transcription activation and repression by MAFK. Together with MAF, represses the transcription of genes under the control of the NFE2L2 oxidative stress pathway. This chain is Transcription regulator protein BACH1, found in Homo sapiens (Human).